A 154-amino-acid chain; its full sequence is Deoxyuridine 5'-triphosphate nucleotidohydrolase (154 aa).

Residues 64–66 (RSG), N77, 81–83 (TID), and K91 each bind substrate.

It belongs to the dUTPase family. Homotrimer. Requires Mg(2+) as cofactor.

It catalyses the reaction dUTP + H2O = dUMP + diphosphate + H(+). It participates in pyrimidine metabolism; dUMP biosynthesis; dUMP from dCTP (dUTP route): step 2/2. Its function is as follows. This enzyme is involved in nucleotide metabolism: it produces dUMP, the immediate precursor of thymidine nucleotides and it decreases the intracellular concentration of dUTP so that uracil cannot be incorporated into DNA. In Mycobacterium avium (strain 104), this protein is Deoxyuridine 5'-triphosphate nucleotidohydrolase.